A 150-amino-acid chain; its full sequence is uncharacterized protein (150 aa).

Belongs to the OsmC/Ohr family.

This is an uncharacterized protein from Bacillus subtilis (strain 168).